The sequence spans 293 residues: Actin-related protein 2/3 complex subunit 2 (293 aa).

Belongs to the ARPC2 family. As to quaternary structure, component of the Arp2/3 complex composed of arpB/Arp2, arpC/Arp3, arcA/p41-arc, arcB/p34-arc, arcC/p21-arc, arcD/p20-arc and arcE/p16-arc. Interacts with carmil (via the region between the LRR domain and COOH-terminal proline-rich domain); carmil is required for Arp2/3-dependent actin nucleation. Arp2/3 complex, MyoB, MyoC, and the alpha and beta subunits of capping protein all form a larger complex with carmil.

The protein resides in the cytoplasm. It localises to the cytoskeleton. It is found in the cell projection. Its subcellular location is the cytosol. The protein localises to the cell cortex. The protein resides in the pseudopodium. Functions as a component of the Arp2/3 complex which is involved in regulation of actin polymerization and together with an activating nucleation-promoting factor (NPF) mediates the formation of branched actin networks. Seems to contact the pointed end of the daughter actin filament. The Arp2/3 complex is involved in organizing the actin system in cell motility and chemotaxis, in phagocytosis and macropinocytosis, at late steps of endosome processing, and in mitosis. In concert with a group of other proteins, the Arp2/3 complex plays a general role in the rapid activation and adaptation of the actin system to its multiple functions. The polypeptide is Actin-related protein 2/3 complex subunit 2 (arcB) (Dictyostelium discoideum (Social amoeba)).